Reading from the N-terminus, the 268-residue chain is Ribosomal RNA small subunit methyltransferase A (268 aa).

6 residues coordinate S-adenosyl-L-methionine: Asn18, Leu20, Gly45, Glu66, Asp91, and Asn112.

Belongs to the class I-like SAM-binding methyltransferase superfamily. rRNA adenine N(6)-methyltransferase family. RsmA subfamily.

The protein localises to the cytoplasm. It catalyses the reaction adenosine(1518)/adenosine(1519) in 16S rRNA + 4 S-adenosyl-L-methionine = N(6)-dimethyladenosine(1518)/N(6)-dimethyladenosine(1519) in 16S rRNA + 4 S-adenosyl-L-homocysteine + 4 H(+). Its function is as follows. Specifically dimethylates two adjacent adenosines (A1518 and A1519) in the loop of a conserved hairpin near the 3'-end of 16S rRNA in the 30S particle. May play a critical role in biogenesis of 30S subunits. This chain is Ribosomal RNA small subunit methyltransferase A, found in Shewanella sp. (strain MR-7).